The chain runs to 1063 residues: JmjC domain-containing histone demethylation protein 1 (1063 aa).

The 181-residue stretch at 86–266 folds into the JmjC domain; it reads LYNVLSLEYS…TQLRVYQVEN (181 aa). Thr160 serves as a coordination point for substrate. Residues His163 and Asp165 each contribute to the Fe cation site. Residue Lys180 coordinates substrate. His234 serves as a coordination point for Fe cation. Residues 379–389 are compositionally biased toward acidic residues; it reads GLEEEAEDEDV. 3 disordered regions span residues 379 to 400, 554 to 750, and 776 to 1040; these read GLEE…AEER, ESDE…NPYN, and VELH…KRAK. Positions 390–400 are enriched in basic and acidic residues; sequence KPETKKEAEER. Acidic residues-rich tracts occupy residues 594–605 and 613–631; these read PEYDEDMEEYDP and ELEE…EEEY. Positions 636 to 646 are enriched in low complexity; sequence TRRSSTRGSAS. Composition is skewed to basic and acidic residues over residues 647–665, 674–712, 776–806, 813–835, and 892–902; these read TKEE…PKKE, EKSS…ELRA, VELH…HEDS, PYDR…DSHR, and EPRRSNDRRTS. The span at 926–937 shows a compositional bias: low complexity; the sequence is AEAASASSSRHS. Polar residues-rich tracts occupy residues 950–963 and 973–982; these read LNSS…TPMY and WLPNTSNVTR. The span at 1005 to 1016 shows a compositional bias: pro residues; the sequence is PPFPRSITPPPV. Positions 1020–1030 are enriched in polar residues; that stretch reads ELKSQSNGRKS. Basic and acidic residues predominate over residues 1031 to 1040; that stretch reads NYSEDGKRAK.

It belongs to the JHDM1 histone demethylase family. Fe(2+) is required as a cofactor.

Its subcellular location is the nucleus. It carries out the reaction N(6),N(6)-dimethyl-L-lysyl(36)-[histone H3] + 2 2-oxoglutarate + 2 O2 = L-lysyl(36)-[histone H3] + 2 formaldehyde + 2 succinate + 2 CO2. Functionally, histone demethylase that specifically demethylates 'Lys-36' of histone H3, thereby playing a central role in histone code. This is JmjC domain-containing histone demethylation protein 1 (jhdm-1) from Caenorhabditis briggsae.